Consider the following 165-residue polypeptide: Putative 4-hydroxy-4-methyl-2-oxoglutarate aldolase (165 aa).

Substrate-binding positions include 80-83 and arginine 102; that span reads GGNL. Aspartate 103 is an a divalent metal cation binding site.

Belongs to the class II aldolase/RraA-like family. As to quaternary structure, homotrimer. Requires a divalent metal cation as cofactor.

The enzyme catalyses 4-hydroxy-4-methyl-2-oxoglutarate = 2 pyruvate. The catalysed reaction is oxaloacetate + H(+) = pyruvate + CO2. Catalyzes the aldol cleavage of 4-hydroxy-4-methyl-2-oxoglutarate (HMG) into 2 molecules of pyruvate. Also contains a secondary oxaloacetate (OAA) decarboxylase activity due to the common pyruvate enolate transition state formed following C-C bond cleavage in the retro-aldol and decarboxylation reactions. In Burkholderia mallei (strain NCTC 10247), this protein is Putative 4-hydroxy-4-methyl-2-oxoglutarate aldolase.